A 27-amino-acid chain; its full sequence is Flagellar filament 31.5 kDa core protein (27 aa).

Belongs to the bacterial flagellin family. As to quaternary structure, the flagellum consists of an outer layer composed of repeating units of FlaA around a core that contains one or all of five antigenically related polypeptides.

It is found in the periplasmic flagellum. The protein resides in the periplasm. Its function is as follows. Component of the core of the flagella. The polypeptide is Flagellar filament 31.5 kDa core protein (Spirochaeta aurantia).